A 318-amino-acid chain; its full sequence is Protease HtpX homolog (318 aa).

The next 3 membrane-spanning stretches (helical) occupy residues 1 to 21, 35 to 55, and 56 to 76; these read MLEA…VGRL, ILGL…GSAI, and AGLV…SRIV. A Zn(2+)-binding site is contributed by His167. Residue Glu168 is part of the active site. His171 provides a ligand contact to Zn(2+). The next 2 membrane-spanning stretches (helical) occupy residues 178 to 198 and 209 to 229; these read LVMT…DPWL and IAFL…LVAA. Glu235 serves as a coordination point for Zn(2+).

This sequence belongs to the peptidase M48B family. It depends on Zn(2+) as a cofactor.

Its subcellular location is the cell membrane. This is Protease HtpX homolog from Methanopyrus kandleri (strain AV19 / DSM 6324 / JCM 9639 / NBRC 100938).